The following is a 210-amino-acid chain: ATP phosphoribosyltransferase (210 aa).

This sequence belongs to the ATP phosphoribosyltransferase family. Short subfamily. In terms of assembly, heteromultimer composed of HisG and HisZ subunits.

The protein localises to the cytoplasm. The catalysed reaction is 1-(5-phospho-beta-D-ribosyl)-ATP + diphosphate = 5-phospho-alpha-D-ribose 1-diphosphate + ATP. It functions in the pathway amino-acid biosynthesis; L-histidine biosynthesis; L-histidine from 5-phospho-alpha-D-ribose 1-diphosphate: step 1/9. Catalyzes the condensation of ATP and 5-phosphoribose 1-diphosphate to form N'-(5'-phosphoribosyl)-ATP (PR-ATP). Has a crucial role in the pathway because the rate of histidine biosynthesis seems to be controlled primarily by regulation of HisG enzymatic activity. The polypeptide is ATP phosphoribosyltransferase (Caldanaerobacter subterraneus subsp. tengcongensis (strain DSM 15242 / JCM 11007 / NBRC 100824 / MB4) (Thermoanaerobacter tengcongensis)).